The primary structure comprises 198 residues: Proteasome subunit beta 1 (198 aa).

The propeptide at 1–8 (MSMYMPGA) is removed in mature form; by autocatalysis. Catalysis depends on Thr-9, which acts as the Nucleophile.

Belongs to the peptidase T1B family. In terms of assembly, the 20S proteasome core is composed of 14 alpha and 14 beta subunits that assemble into four stacked heptameric rings, resulting in a barrel-shaped structure. The two inner rings, each composed of seven catalytic beta subunits, are sandwiched by two outer rings, each composed of seven alpha subunits. The catalytic chamber with the active sites is on the inside of the barrel. Has a gated structure, the ends of the cylinder being occluded by the N-termini of the alpha-subunits. Is capped at one or both ends by the proteasome regulatory ATPase, PAN.

It is found in the cytoplasm. The catalysed reaction is Cleavage of peptide bonds with very broad specificity.. The formation of the proteasomal ATPase PAN-20S proteasome complex, via the docking of the C-termini of PAN into the intersubunit pockets in the alpha-rings, triggers opening of the gate for substrate entry. Interconversion between the open-gate and close-gate conformations leads to a dynamic regulation of the 20S proteasome proteolysis activity. In terms of biological role, component of the proteasome core, a large protease complex with broad specificity involved in protein degradation. The protein is Proteasome subunit beta 1 of Nitrosopumilus maritimus (strain SCM1).